The primary structure comprises 231 residues: Urease accessory protein UreE (231 aa).

The disordered stretch occupies residues 185 to 231 (VASPLDEPHGSGLHIHGIHSHGEGHSHGDHDHDHSHSHGDHDHDHKH). Basic and acidic residues predominate over residues 204 to 231 (SHGEGHSHGDHDHDHSHSHGDHDHDHKH).

Belongs to the UreE family.

The protein resides in the cytoplasm. Functionally, involved in urease metallocenter assembly. Binds nickel. Probably functions as a nickel donor during metallocenter assembly. The sequence is that of Urease accessory protein UreE from Yersinia pseudotuberculosis serotype O:1b (strain IP 31758).